The primary structure comprises 125 residues: Small ribosomal subunit protein uS13 (125 aa).

A disordered region spans residues 93 to 125; the sequence is RAGLPVRGQRTRTNARTRRGARKTVAGKKKATR. A compositionally biased stretch (basic residues) spans 101-125; that stretch reads QRTRTNARTRRGARKTVAGKKKATR.

Belongs to the universal ribosomal protein uS13 family. As to quaternary structure, part of the 30S ribosomal subunit. Forms a loose heterodimer with protein S19. Forms two bridges to the 50S subunit in the 70S ribosome.

Functionally, located at the top of the head of the 30S subunit, it contacts several helices of the 16S rRNA. In the 70S ribosome it contacts the 23S rRNA (bridge B1a) and protein L5 of the 50S subunit (bridge B1b), connecting the 2 subunits; these bridges are implicated in subunit movement. Contacts the tRNAs in the A and P-sites. This chain is Small ribosomal subunit protein uS13, found in Synechococcus elongatus (strain ATCC 33912 / PCC 7942 / FACHB-805) (Anacystis nidulans R2).